A 490-amino-acid chain; its full sequence is ATP synthase subunit beta, plastid (490 aa).

170–177 is a binding site for ATP; the sequence is GGAGVGKT.

The protein belongs to the ATPase alpha/beta chains family. In terms of assembly, F-type ATPases have 2 components, CF(1) - the catalytic core - and CF(0) - the membrane proton channel. CF(1) has five subunits: alpha(3), beta(3), gamma(1), delta(1), epsilon(1). CF(0) has four main subunits: a(1), b(1), b'(1) and c(9-12).

Its subcellular location is the plastid membrane. The catalysed reaction is ATP + H2O + 4 H(+)(in) = ADP + phosphate + 5 H(+)(out). Produces ATP from ADP in the presence of a proton gradient across the membrane. The catalytic sites are hosted primarily by the beta subunits. The chain is ATP synthase subunit beta, plastid (atpB) from Cuscuta japonica (Japanese dodder).